A 283-amino-acid polypeptide reads, in one-letter code: Pantothenate synthetase (283 aa).

ATP is bound at residue 30-37 (MGYLHDGH). His37 serves as the catalytic Proton donor. Gln61 contributes to the (R)-pantoate binding site. Gln61 serves as a coordination point for beta-alanine. Position 147–150 (147–150 (GKKD)) interacts with ATP. Gln153 provides a ligand contact to (R)-pantoate. ATP contacts are provided by residues Ile176 and 184–187 (MSSR).

The protein belongs to the pantothenate synthetase family. Homodimer.

The protein localises to the cytoplasm. It carries out the reaction (R)-pantoate + beta-alanine + ATP = (R)-pantothenate + AMP + diphosphate + H(+). It participates in cofactor biosynthesis; (R)-pantothenate biosynthesis; (R)-pantothenate from (R)-pantoate and beta-alanine: step 1/1. Its function is as follows. Catalyzes the condensation of pantoate with beta-alanine in an ATP-dependent reaction via a pantoyl-adenylate intermediate. This Geobacter sulfurreducens (strain ATCC 51573 / DSM 12127 / PCA) protein is Pantothenate synthetase.